The sequence spans 415 residues: Corticotropin-releasing factor receptor 1 (415 aa).

The signal sequence occupies residues 1-23 (MGRRPQLRLVKALLLLGLNPVST). Residues 24 to 111 (SLQDQRCENL…CQEILNEEKK (88 aa)) are Extracellular-facing. Cystine bridges form between Cys-30-Cys-54, Cys-44-Cys-87, and Cys-68-Cys-102. Asn-38, Asn-45, Asn-78, Asn-90, and Asn-98 each carry an N-linked (GlcNAc...) asparagine glycan. Residues 99–108 (YSECQEILNE) form an important for peptide agonist binding region. Residues 112–142 (SKVHYHVAVIINYLGHCISLVALLVAFVLFL) traverse the membrane as a helical segment. Residues 143–149 (RLRSIRC) are Cytoplasmic-facing. Residues 150 to 174 (LRNIIHWNLISAFILRNATWFVVQL) traverse the membrane as a helical segment. Topologically, residues 175–189 (TVSPEVHQSNVAWCR) are extracellular. A disulfide bridge links Cys-188 with Cys-258. Residues 190–218 (LVTAAYNYFHVTNFFWMFGEGCYLHTAIV) form a helical membrane-spanning segment. Topologically, residues 219–225 (LTYSTDR) are cytoplasmic. A helical membrane pass occupies residues 226 to 253 (LRKWMFVCIGWGVPFPIIVAWAIGKLHY). Residues 254–269 (DNEKCWFGKRPGVYTD) are Extracellular-facing. A helical membrane pass occupies residues 270-295 (YIYQGPMILVLLINFIFLFNIVRILM). The tract at residues 280–290 (LLINFIFLFNI) is important for antagonist binding. Over 296 to 306 (TKLRASTTSET) the chain is Cytoplasmic. Position 301 is a phosphoserine; by PKA (Ser-301). The chain crosses the membrane as a helical span at residues 307–331 (IQYRKAVKATLVLLPLLGITYMLFF). Residues 332–338 (VNPGEDE) are Extracellular-facing. A helical transmembrane segment spans residues 339–368 (VSRVVFIYFNSFLESFQGFFVSVFYCFLNS). The Cytoplasmic segment spans residues 369-415 (EVRSAIRKRWRRWQDKHSIRARVARAMSIPTSPTRVSFHSIKQSTAV).

This sequence belongs to the G-protein coupled receptor 2 family. Interacts (via N-terminal extracellular domain) with CRH and UCN. Interacts with DLG1; this inhibits endocytosis of CRHR1 after agonist binding. Heterodimer; heterodimerizes with GPER1. In terms of processing, C-terminal Ser or Thr residues may be phosphorylated. Post-translationally, phosphorylation at Ser-301 by PKA prevents maximal coupling to Gq-protein, and thereby negatively regulates downstream signaling. Detected in brain, especially in cerebellum. Detected in pituitary gland, and at lower levels in the olfactory bulb.

It is found in the cell membrane. Its subcellular location is the endosome. In terms of biological role, G-protein coupled receptor for CRH (corticotropin-releasing factor) and UCN (urocortin). Has high affinity for CRH and UCN. Ligand binding causes a conformation change that triggers signaling via guanine nucleotide-binding proteins (G proteins) and down-stream effectors, such as adenylate cyclase. Promotes the activation of adenylate cyclase, leading to increased intracellular cAMP levels. Inhibits the activity of the calcium channel CACNA1H. Required for normal embryonic development of the adrenal gland and for normal hormonal responses to stress. Plays a role in the response to anxiogenic stimuli. This is Corticotropin-releasing factor receptor 1 (Crhr1) from Rattus norvegicus (Rat).